A 279-amino-acid polypeptide reads, in one-letter code: Octanoyl-[GcvH]:protein N-octanoyltransferase (279 aa).

The 206-residue stretch at 48–253 folds into the BPL/LPL catalytic domain; it reads ETSPPVIRLW…TLEKLSDEIV (206 aa). Cys152 serves as the catalytic Acyl-thioester intermediate.

It belongs to the octanoyltransferase LipL family.

It catalyses the reaction N(6)-octanoyl-L-lysyl-[glycine-cleavage complex H protein] + L-lysyl-[lipoyl-carrier protein] = N(6)-octanoyl-L-lysyl-[lipoyl-carrier protein] + L-lysyl-[glycine-cleavage complex H protein]. It functions in the pathway protein modification; protein lipoylation via endogenous pathway; protein N(6)-(lipoyl)lysine from octanoyl-[acyl-carrier-protein]. Functionally, catalyzes the amidotransfer (transamidation) of the octanoyl moiety from octanoyl-GcvH to the lipoyl domain of the E2 subunit of lipoate-dependent enzymes. The sequence is that of Octanoyl-[GcvH]:protein N-octanoyltransferase from Oceanobacillus iheyensis (strain DSM 14371 / CIP 107618 / JCM 11309 / KCTC 3954 / HTE831).